Reading from the N-terminus, the 96-residue chain is Co-chaperonin GroES (96 aa).

Belongs to the GroES chaperonin family. As to quaternary structure, heptamer of 7 subunits arranged in a ring. Interacts with the chaperonin GroEL.

The protein resides in the cytoplasm. Together with the chaperonin GroEL, plays an essential role in assisting protein folding. The GroEL-GroES system forms a nano-cage that allows encapsulation of the non-native substrate proteins and provides a physical environment optimized to promote and accelerate protein folding. GroES binds to the apical surface of the GroEL ring, thereby capping the opening of the GroEL channel. The chain is Co-chaperonin GroES from Verminephrobacter eiseniae (strain EF01-2).